A 63-amino-acid chain; its full sequence is MAKVPIAFLKFVIVLILFIAMSGMIEACIGNGGRCNENVGPPYCCSGFCLRQPNQGYGVCRNR.

An N-terminal signal peptide occupies residues methionine 1–alanine 27. 3 disulfides stabilise this stretch: cysteine 28/cysteine 45, cysteine 35/cysteine 49, and cysteine 44/cysteine 60.

Belongs to the AMP family. As to quaternary structure, homodimer. Seed specific.

It is found in the secreted. Its function is as follows. Possesses antifungal activity and is also active on two tested Gram-positive bacteria but is non-toxic for Gram-negative bacteria and cultured human cells. This Mirabilis jalapa (Garden four-o'clock) protein is Antimicrobial peptide 2 (AMP2).